The primary structure comprises 399 residues: Fructose-1,6-bisphosphate aldolase/phosphatase (399 aa).

Residue Asp-11 is the Proton acceptor; for FBP phosphatase activity of the active site. Mg(2+)-binding residues include Asp-11, His-18, Asp-52, and Asp-53. His-18 contacts beta-D-fructose 1,6-bisphosphate. Residue His-18 participates in dihydroxyacetone phosphate binding. Beta-D-fructose 1,6-bisphosphate is bound at residue Tyr-91. Gln-95 contacts Mg(2+). A beta-D-fructose 1,6-bisphosphate-binding site is contributed by 104-105 (GN). Asp-132 provides a ligand contact to Mg(2+). Lys-133 is a binding site for beta-D-fructose 1,6-bisphosphate. Position 133 (Lys-133) interacts with dihydroxyacetone phosphate. Tyr-229 acts as the Proton donor/acceptor; for FBP aldolase activity in catalysis. Residues Lys-232, Asp-233, and Asp-234 each contribute to the Mg(2+) site. Lys-232 acts as the Schiff-base intermediate with DHAP; for FBP aldolase activity in catalysis. Residues 242 to 243 (QS), Arg-266, Asp-297, and Tyr-358 contribute to the beta-D-fructose 1,6-bisphosphate site. Dihydroxyacetone phosphate is bound by residues Arg-266 and Asp-297.

Belongs to the FBP aldolase/phosphatase family. Homooctamer; dimer of tetramers. The cofactor is Mg(2+).

The catalysed reaction is beta-D-fructose 1,6-bisphosphate + H2O = beta-D-fructose 6-phosphate + phosphate. It catalyses the reaction beta-D-fructose 1,6-bisphosphate = D-glyceraldehyde 3-phosphate + dihydroxyacetone phosphate. The protein operates within carbohydrate biosynthesis; gluconeogenesis. Its function is as follows. Catalyzes two subsequent steps in gluconeogenesis: the aldol condensation of dihydroxyacetone phosphate (DHAP) and glyceraldehyde-3-phosphate (GA3P) to fructose-1,6-bisphosphate (FBP), and the dephosphorylation of FBP to fructose-6-phosphate (F6P). This is Fructose-1,6-bisphosphate aldolase/phosphatase from Pyrobaculum neutrophilum (strain DSM 2338 / JCM 9278 / NBRC 100436 / V24Sta) (Thermoproteus neutrophilus).